Reading from the N-terminus, the 80-residue chain is MPKRILQGVVVSDKQEKTIVVKVERRFTHPLLKKTVRRSKNYHAHDEAGTYKIGDTVSIEETKPISRLKRWIVLETAAKA.

This sequence belongs to the universal ribosomal protein uS17 family. As to quaternary structure, part of the 30S ribosomal subunit.

Functionally, one of the primary rRNA binding proteins, it binds specifically to the 5'-end of 16S ribosomal RNA. This is Small ribosomal subunit protein uS17 from Beijerinckia indica subsp. indica (strain ATCC 9039 / DSM 1715 / NCIMB 8712).